The chain runs to 236 residues: Methylosome subunit pICln (236 aa).

An N-acetylserine modification is found at Ser2. The disordered stretch occupies residues 88-109 (EESKEPPSDEDEEDNDDIEPIS). Phosphoserine is present on residues Ser95, Ser143, Ser192, Ser194, Ser197, and Ser209. Acidic residues predominate over residues 95–107 (SDEDEEDNDDIEP). Thr222 is modified (phosphothreonine).

Belongs to the pICln (TC 1.A.47) family. As to quaternary structure, component of the methylosome, a 20S complex containing at least PRMT5/SKB1, WDR77/MEP50 and CLNS1A/pICln. May mediate SNRPD1 and SNRPD3 methylation. Forms a 6S pICln-Sm complex composed of CLNS1A/pICln, SNRPD1, SNRPD2, SNRPE, SNRPF and SNRPG; ring-like structure where CLNS1A/pICln mimics additional Sm proteins and which is unable to assemble into the core snRNP. Interacts with LSM10 and LSM11.

Its subcellular location is the cytoplasm. The protein resides in the cytosol. It localises to the nucleus. The protein localises to the cytoskeleton. Functionally, involved in both the assembly of spliceosomal snRNPs and the methylation of Sm proteins. Chaperone that regulates the assembly of spliceosomal U1, U2, U4 and U5 small nuclear ribonucleoproteins (snRNPs), the building blocks of the spliceosome, and thereby plays an important role in the splicing of cellular pre-mRNAs. Most spliceosomal snRNPs contain a common set of Sm proteins SNRPB, SNRPD1, SNRPD2, SNRPD3, SNRPE, SNRPF and SNRPG that assemble in a heptameric protein ring on the Sm site of the small nuclear RNA to form the core snRNP (Sm core). In the cytosol, the Sm proteins SNRPD1, SNRPD2, SNRPE, SNRPF and SNRPG are trapped in an inactive 6S pICln-Sm complex by the chaperone CLNS1A that controls the assembly of the core snRNP. Dissociation by the SMN complex of CLNS1A from the trapped Sm proteins and their transfer to an SMN-Sm complex triggers the assembly of core snRNPs and their transport to the nucleus. This Mus musculus (Mouse) protein is Methylosome subunit pICln (Clns1a).